Reading from the N-terminus, the 434-residue chain is Glutamyl-tRNA reductase 2 (434 aa).

Substrate contacts are provided by residues 57–60 (TCNR), Ser-113, 118–120 (DFE), and Gln-124. Cys-58 functions as the Nucleophile in the catalytic mechanism. 193–198 (GTGKIG) is a binding site for NADP(+).

The protein belongs to the glutamyl-tRNA reductase family. As to quaternary structure, homodimer.

The catalysed reaction is (S)-4-amino-5-oxopentanoate + tRNA(Glu) + NADP(+) = L-glutamyl-tRNA(Glu) + NADPH + H(+). It functions in the pathway porphyrin-containing compound metabolism; protoporphyrin-IX biosynthesis; 5-aminolevulinate from L-glutamyl-tRNA(Glu): step 1/2. Catalyzes the NADPH-dependent reduction of glutamyl-tRNA(Glu) to glutamate 1-semialdehyde (GSA). The chain is Glutamyl-tRNA reductase 2 from Flavobacterium johnsoniae (strain ATCC 17061 / DSM 2064 / JCM 8514 / BCRC 14874 / CCUG 350202 / NBRC 14942 / NCIMB 11054 / UW101) (Cytophaga johnsonae).